A 142-amino-acid chain; its full sequence is Hemoglobin A subunit alpha-1 (142 aa).

Positions 2-142 constitute a Globin domain; the sequence is VLTAGDKANV…VATALTSKYR (141 aa). Histidine 59 is an O2 binding site. Position 88 (histidine 88) interacts with heme b.

It belongs to the globin family. In terms of assembly, tetramer of alpha-1, alpha-2 and two identical beta chains. As to expression, red blood cells.

Involved in oxygen transport from the lung to the various peripheral tissues. This chain is Hemoglobin A subunit alpha-1, found in Aldabrachelys gigantea (Aldabra giant tortoise).